Consider the following 275-residue polypeptide: MIHFTKMHGLGNDFMVVDGVTQNVFFSPEQIRRLADRNFGIGFDQLLLVEPPYDPDLDFHYRIFNADGSEVEQCGNGARCFARFVRNKGLTQKNKIRVSTNSGKITLRIERDGNVTVNMGVPVIEPSQIPFKAKKSEKTYLLQTPMQTYLCGAISMGNPHCVIQVEDVQTVNVDEIGSSLTRHERFPKGVNVGFMQVINPGHIKLRVYERGAAETLACGTGACAAAAVGQLQDKLDKQVRVDLPGGSLIINWEGEGKPLWMTGPAEHVYDGQIQL.

N12, Q45, and N65 together coordinate substrate. C74 (proton donor) is an active-site residue. Substrate is bound by residues 75 to 76 (GN), N158, N191, and 209 to 210 (ER). C218 functions as the Proton acceptor in the catalytic mechanism. Substrate is bound at residue 219-220 (GT).

It belongs to the diaminopimelate epimerase family. Homodimer.

It localises to the cytoplasm. It catalyses the reaction (2S,6S)-2,6-diaminopimelate = meso-2,6-diaminopimelate. The protein operates within amino-acid biosynthesis; L-lysine biosynthesis via DAP pathway; DL-2,6-diaminopimelate from LL-2,6-diaminopimelate: step 1/1. Functionally, catalyzes the stereoinversion of LL-2,6-diaminopimelate (L,L-DAP) to meso-diaminopimelate (meso-DAP), a precursor of L-lysine and an essential component of the bacterial peptidoglycan. The protein is Diaminopimelate epimerase of Shewanella frigidimarina (strain NCIMB 400).